Consider the following 411-residue polypeptide: MKMVLSQRQREELNQAIADYLGSNGYADSLEAFRKEADLSTEAEKKFGGLLEKKWTSVIRLQKKVMELEAKLTEAEKEVIEGAPTKNKRTPGEWIPRPPEKYSMSGHRASITRVIFHPIFGLVVSASEDATIKIWDFETGEYERSLKGHTDSVQDVAFDAQGKLLASCSADLSIKLWDFQQTYECVKTMHGHDHNVSSVAFVPAGDYVLSASRDRTVKMWEVATGYCVKTYTGHREWVRMVRVHIEGSIFATCSNDHTIRVWLTNSRDCKVELRDHEHTVECIAWAPEAAASAINEAAGADNKKGHHQGPFLASGSRDKTIRIWDVSVGLCLFTLNGHDNWVRGLAFHPAGKYLVSASDDKTIRVWDLRNKRCMKTLYAHQHFCTSIDFHKAHPYVISGSVDQTVKVWECR.

A LisH domain is found at 9–41 (QREELNQAIADYLGSNGYADSLEAFRKEADLST). The stretch at 56 to 83 (TSVIRLQKKVMELEAKLTEAEKEVIEGA) forms a coiled coil. 7 WD repeats span residues 106–147 (GHRA…RSLK), 148–187 (GHTD…ECVK), 191–230 (GHDH…CVKT), 233–272 (GHRE…CKVE), 275–334 (DHEH…CLFT), 337–376 (GHDN…CMKT), and 379–411 (AHQH…WECR).

The protein belongs to the WD repeat LIS1/nudF family.

The protein resides in the cytoplasm. It localises to the cytoskeleton. It is found in the microtubule organizing center. Its subcellular location is the centrosome. Positively regulates the activity of the minus-end directed microtubule motor protein dynein. May enhance dynein-mediated microtubule sliding by targeting dynein to the microtubule plus end. Required for several dynein- and microtubule-dependent processes. This Drosophila ananassae (Fruit fly) protein is Lissencephaly-1 homolog.